Consider the following 288-residue polypeptide: Glutamate racemase (288 aa).

Positions Met1 to Gln21 are disordered. Residues Val8–Gln21 show a composition bias toward polar residues. Substrate-binding positions include Asp32 to Ser33 and Tyr64 to Gly65. The Proton donor/acceptor role is filled by Cys96. Position 97–98 (Asn97–Thr98) interacts with substrate. Cys209 acts as the Proton donor/acceptor in catalysis. Residue Thr210–His211 coordinates substrate.

The protein belongs to the aspartate/glutamate racemases family.

The catalysed reaction is L-glutamate = D-glutamate. It participates in cell wall biogenesis; peptidoglycan biosynthesis. Provides the (R)-glutamate required for cell wall biosynthesis. This chain is Glutamate racemase, found in Proteus mirabilis (strain HI4320).